We begin with the raw amino-acid sequence, 251 residues long: MAEPTEKRLVSETGVAARVAQIVEGPIEGLGFRLVRVKISNTNGRTVQIMAERPDGTMGVDECEAVSRAISPILDLEDPVGDAYYLEVSSPGIDRPLVRVSDFERWAGYEAKVELAVPMDGRKRFRGIIGVPSADGTTVPIDLPDVKPGLPSRIDVPLRDLGEAHLVLTDELIRESLRRGSAPPQDGEEGDEEEGAEAEHEAPQVRFIPQPKRPKPKLDKKSDKPVKAKKPKPGGGIVTKAARLKNRDTLH.

The segment at 176-251 is disordered; sequence SLRRGSAPPQ…ARLKNRDTLH (76 aa). Acidic residues predominate over residues 186–196; sequence DGEEGDEEEGA. Basic and acidic residues predominate over residues 216 to 226; the sequence is PKLDKKSDKPV.

Belongs to the RimP family.

It localises to the cytoplasm. Its function is as follows. Required for maturation of 30S ribosomal subunits. The polypeptide is Ribosome maturation factor RimP (Methylorubrum extorquens (strain PA1) (Methylobacterium extorquens)).